A 615-amino-acid chain; its full sequence is DNA mismatch repair protein MutL (615 aa).

Residues 363 to 397 (FAEPAAREPVAPRYTPAPASGSRPAAPWPNAQPGY) form a disordered region. Over residues 364-391 (AEPAAREPVAPRYTPAPASGSRPAAPWP) the composition is skewed to low complexity.

It belongs to the DNA mismatch repair MutL/HexB family.

This protein is involved in the repair of mismatches in DNA. It is required for dam-dependent methyl-directed DNA mismatch repair. May act as a 'molecular matchmaker', a protein that promotes the formation of a stable complex between two or more DNA-binding proteins in an ATP-dependent manner without itself being part of a final effector complex. The protein is DNA mismatch repair protein MutL of Shigella boydii serotype 4 (strain Sb227).